The following is a 237-amino-acid chain: Probable transcriptional regulatory protein Exig_1693 (237 aa).

It belongs to the TACO1 family. YeeN subfamily.

The protein resides in the cytoplasm. The chain is Probable transcriptional regulatory protein Exig_1693 from Exiguobacterium sibiricum (strain DSM 17290 / CCUG 55495 / CIP 109462 / JCM 13490 / 255-15).